Reading from the N-terminus, the 562-residue chain is Arginine--tRNA ligase (562 aa).

Residues 129 to 139 (ANPTGPLHVGH) carry the 'HIGH' region motif.

The protein belongs to the class-I aminoacyl-tRNA synthetase family. Monomer.

The protein localises to the cytoplasm. It carries out the reaction tRNA(Arg) + L-arginine + ATP = L-arginyl-tRNA(Arg) + AMP + diphosphate. The chain is Arginine--tRNA ligase from Xylella fastidiosa (strain M12).